Consider the following 307-residue polypeptide: 4-hydroxythreonine-4-phosphate dehydrogenase (307 aa).

The substrate site is built by H126 and T127. A divalent metal cation contacts are provided by H156, H195, and H251. 3 residues coordinate substrate: K259, N268, and R277.

It belongs to the PdxA family. As to quaternary structure, homodimer. It depends on Zn(2+) as a cofactor. Mg(2+) serves as cofactor. The cofactor is Co(2+).

The protein localises to the cytoplasm. The catalysed reaction is 4-(phosphooxy)-L-threonine + NAD(+) = 3-amino-2-oxopropyl phosphate + CO2 + NADH. The protein operates within cofactor biosynthesis; pyridoxine 5'-phosphate biosynthesis; pyridoxine 5'-phosphate from D-erythrose 4-phosphate: step 4/5. Its function is as follows. Catalyzes the NAD(P)-dependent oxidation of 4-(phosphooxy)-L-threonine (HTP) into 2-amino-3-oxo-4-(phosphooxy)butyric acid which spontaneously decarboxylates to form 3-amino-2-oxopropyl phosphate (AHAP). The protein is 4-hydroxythreonine-4-phosphate dehydrogenase of Helicobacter pylori (strain P12).